The primary structure comprises 336 residues: Biotin synthase (336 aa).

One can recognise a Radical SAM core domain in the interval 55–282; it reads NRVQLSKLLN…QSHVRLTAGR (228 aa). The [4Fe-4S] cluster site is built by cysteine 70, cysteine 74, and cysteine 77. Positions 114, 145, 205, and 277 each coordinate [2Fe-2S] cluster.

The protein belongs to the radical SAM superfamily. Biotin synthase family. As to quaternary structure, homodimer. Requires [4Fe-4S] cluster as cofactor. It depends on [2Fe-2S] cluster as a cofactor.

It catalyses the reaction (4R,5S)-dethiobiotin + (sulfur carrier)-SH + 2 reduced [2Fe-2S]-[ferredoxin] + 2 S-adenosyl-L-methionine = (sulfur carrier)-H + biotin + 2 5'-deoxyadenosine + 2 L-methionine + 2 oxidized [2Fe-2S]-[ferredoxin]. The protein operates within cofactor biosynthesis; biotin biosynthesis; biotin from 7,8-diaminononanoate: step 2/2. Its function is as follows. Catalyzes the conversion of dethiobiotin (DTB) to biotin by the insertion of a sulfur atom into dethiobiotin via a radical-based mechanism. The protein is Biotin synthase of Brucella anthropi (strain ATCC 49188 / DSM 6882 / CCUG 24695 / JCM 21032 / LMG 3331 / NBRC 15819 / NCTC 12168 / Alc 37) (Ochrobactrum anthropi).